Here is a 113-residue protein sequence, read N- to C-terminus: U-scoloptoxin(16)-Sa1a (113 aa).

The N-terminal stretch at Met-1 to Ala-29 is a signal peptide.

It belongs to the scoloptoxin-16 family. Contains 4 disulfide bonds. Expressed by the venom gland.

The protein resides in the secreted. This Scolopendra alternans (Florida Keys giant centipede) protein is U-scoloptoxin(16)-Sa1a.